The chain runs to 208 residues: Small ribosomal subunit protein uS2 (208 aa).

The disordered stretch occupies residues 189-208; that stretch reads KPDQDLPVPPEEFETRLVQT.

It belongs to the universal ribosomal protein uS2 family.

The sequence is that of Small ribosomal subunit protein uS2 from Pyrobaculum arsenaticum (strain DSM 13514 / JCM 11321 / PZ6).